Consider the following 623-residue polypeptide: DNA-directed RNA polymerase III subunit rpc3 (623 aa).

Disordered stretches follow at residues 131-164, 249-282, and 381-412; these read RSDA…HVSD, RGVK…DEEN, and SLGP…HGAT. A compositionally biased stretch (acidic residues) spans 273-282; the sequence is DDGEDEDEEN. The tract at residues 550-571 is leucine-zipper; the sequence is TYKAMSRCLQRLKFERGRLKDF.

The protein belongs to the RNA polymerase beta chain family. Component of the RNA polymerase III (Pol III) complex consisting of 17 subunits.

Its subcellular location is the nucleus. Its function is as follows. DNA-dependent RNA polymerase catalyzes the transcription of DNA into RNA using the four ribonucleoside triphosphates as substrates. Specific core component of RNA polymerase III which synthesizes small RNAs, such as 5S rRNA and tRNAs. This Emericella nidulans (strain FGSC A4 / ATCC 38163 / CBS 112.46 / NRRL 194 / M139) (Aspergillus nidulans) protein is DNA-directed RNA polymerase III subunit rpc3 (rpc82).